The following is a 196-amino-acid chain: Pyridoxal 5'-phosphate synthase subunit PdxT (196 aa).

52-54 (GES) provides a ligand contact to L-glutamine. Residue Cys-84 is the Nucleophile of the active site. Residues Arg-113 and 141 to 142 (IR) each bind L-glutamine. Residues His-178 and Glu-180 each act as charge relay system in the active site.

It belongs to the glutaminase PdxT/SNO family. In the presence of PdxS, forms a dodecamer of heterodimers. Only shows activity in the heterodimer.

The enzyme catalyses aldehydo-D-ribose 5-phosphate + D-glyceraldehyde 3-phosphate + L-glutamine = pyridoxal 5'-phosphate + L-glutamate + phosphate + 3 H2O + H(+). It carries out the reaction L-glutamine + H2O = L-glutamate + NH4(+). Its pathway is cofactor biosynthesis; pyridoxal 5'-phosphate biosynthesis. Catalyzes the hydrolysis of glutamine to glutamate and ammonia as part of the biosynthesis of pyridoxal 5'-phosphate. The resulting ammonia molecule is channeled to the active site of PdxS. The chain is Pyridoxal 5'-phosphate synthase subunit PdxT from Pyrococcus horikoshii (strain ATCC 700860 / DSM 12428 / JCM 9974 / NBRC 100139 / OT-3).